Here is a 227-residue protein sequence, read N- to C-terminus: Cytochrome c oxidase subunit 2 (227 aa).

Residues 1–14 (MAYPFQLGLQDATS) are Mitochondrial intermembrane-facing. Residues 15-45 (PIMEELLHFHDHTLMIVFLISSLVLYIISLM) traverse the membrane as a helical segment. Over 46 to 59 (LTTKLTHTSTMDAQ) the chain is Mitochondrial matrix. Residues 60–87 (EVETVWTILPAIILILIALPSLRILYMM) form a helical membrane-spanning segment. Topologically, residues 88 to 227 (DEINNPSLTV…YFETWSALMV (140 aa)) are mitochondrial intermembrane. Cu cation-binding residues include H161, C196, E198, C200, H204, and M207. E198 is a Mg(2+) binding site. At Y218 the chain carries Phosphotyrosine.

Belongs to the cytochrome c oxidase subunit 2 family. Component of the cytochrome c oxidase (complex IV, CIV), a multisubunit enzyme composed of 14 subunits. The complex is composed of a catalytic core of 3 subunits MT-CO1, MT-CO2 and MT-CO3, encoded in the mitochondrial DNA, and 11 supernumerary subunits COX4I, COX5A, COX5B, COX6A, COX6B, COX6C, COX7A, COX7B, COX7C, COX8 and NDUFA4, which are encoded in the nuclear genome. The complex exists as a monomer or a dimer and forms supercomplexes (SCs) in the inner mitochondrial membrane with NADH-ubiquinone oxidoreductase (complex I, CI) and ubiquinol-cytochrome c oxidoreductase (cytochrome b-c1 complex, complex III, CIII), resulting in different assemblies (supercomplex SCI(1)III(2)IV(1) and megacomplex MCI(2)III(2)IV(2)). Found in a complex with TMEM177, COA6, COX18, COX20, SCO1 and SCO2. Interacts with TMEM177 in a COX20-dependent manner. Interacts with COX20. Interacts with COX16. It depends on Cu cation as a cofactor.

The protein localises to the mitochondrion inner membrane. The enzyme catalyses 4 Fe(II)-[cytochrome c] + O2 + 8 H(+)(in) = 4 Fe(III)-[cytochrome c] + 2 H2O + 4 H(+)(out). Its function is as follows. Component of the cytochrome c oxidase, the last enzyme in the mitochondrial electron transport chain which drives oxidative phosphorylation. The respiratory chain contains 3 multisubunit complexes succinate dehydrogenase (complex II, CII), ubiquinol-cytochrome c oxidoreductase (cytochrome b-c1 complex, complex III, CIII) and cytochrome c oxidase (complex IV, CIV), that cooperate to transfer electrons derived from NADH and succinate to molecular oxygen, creating an electrochemical gradient over the inner membrane that drives transmembrane transport and the ATP synthase. Cytochrome c oxidase is the component of the respiratory chain that catalyzes the reduction of oxygen to water. Electrons originating from reduced cytochrome c in the intermembrane space (IMS) are transferred via the dinuclear copper A center (CU(A)) of subunit 2 and heme A of subunit 1 to the active site in subunit 1, a binuclear center (BNC) formed by heme A3 and copper B (CU(B)). The BNC reduces molecular oxygen to 2 water molecules using 4 electrons from cytochrome c in the IMS and 4 protons from the mitochondrial matrix. This is Cytochrome c oxidase subunit 2 (MT-CO2) from Canis adustus (Side-striped jackal).